A 79-amino-acid chain; its full sequence is CDC42 small effector protein 1-A (79 aa).

Residues Cys10 and Cys11 are each lipidated (S-palmitoyl cysteine). Residues 30–43 (IGEPMNFVHLTHVG) enclose the CRIB domain.

Belongs to the CDC42SE/SPEC family.

The protein resides in the cytoplasm. It is found in the cytoskeleton. The protein localises to the cell membrane. Its function is as follows. Probably involved in the organization of the actin cytoskeleton by acting downstream of CDC42, inducing actin filament assembly. This is CDC42 small effector protein 1-A (cdc42se1-a) from Xenopus laevis (African clawed frog).